The primary structure comprises 277 residues: Ribosomal RNA small subunit methyltransferase A (277 aa).

The S-adenosyl-L-methionine site is built by His15, Leu17, Gly42, Glu64, Asp89, and Asn109.

This sequence belongs to the class I-like SAM-binding methyltransferase superfamily. rRNA adenine N(6)-methyltransferase family. RsmA subfamily.

It localises to the cytoplasm. The enzyme catalyses adenosine(1518)/adenosine(1519) in 16S rRNA + 4 S-adenosyl-L-methionine = N(6)-dimethyladenosine(1518)/N(6)-dimethyladenosine(1519) in 16S rRNA + 4 S-adenosyl-L-homocysteine + 4 H(+). In terms of biological role, specifically dimethylates two adjacent adenosines (A1518 and A1519) in the loop of a conserved hairpin near the 3'-end of 16S rRNA in the 30S particle. May play a critical role in biogenesis of 30S subunits. This is Ribosomal RNA small subunit methyltransferase A from Synechococcus sp. (strain CC9311).